Reading from the N-terminus, the 279-residue chain is RRP15-like protein (279 aa).

Disordered regions lie at residues 1-40 (MALL…GANA), 56-120 (GPTV…TERR), and 200-279 (KSTA…DEED). Residues 73–83 (KTSEAAKKPGF) are compositionally biased toward basic and acidic residues. Composition is skewed to acidic residues over residues 93-104 (KEEDDDDEEDGD) and 213-224 (QETDDDDEDDTA). The segment covering 232–245 (KKSEWNVLREDFMT) has biased composition (basic and acidic residues). Acidic residues predominate over residues 267–279 (DEADDSDDDDEED).

This sequence belongs to the RRP15 family.

In Drosophila pseudoobscura pseudoobscura (Fruit fly), this protein is RRP15-like protein.